Here is a 624-residue protein sequence, read N- to C-terminus: DNA-directed RNA polymerase subunit gamma (624 aa).

Positions 70, 72, 85, and 88 each coordinate Zn(2+). Residues Asp-466, Asp-468, and Asp-470 each contribute to the Mg(2+) site.

This sequence belongs to the RNA polymerase beta' chain family. RpoC1 subfamily. In cyanobacteria the RNAP catalytic core is composed of 2 alpha, 1 beta, 1 beta', 1 gamma and 1 omega subunit. When a sigma factor is associated with the core the holoenzyme is formed, which can initiate transcription. The cofactor is Mg(2+). Zn(2+) is required as a cofactor.

The enzyme catalyses RNA(n) + a ribonucleoside 5'-triphosphate = RNA(n+1) + diphosphate. In terms of biological role, DNA-dependent RNA polymerase catalyzes the transcription of DNA into RNA using the four ribonucleoside triphosphates as substrates. The chain is DNA-directed RNA polymerase subunit gamma from Synechococcus elongatus (strain ATCC 33912 / PCC 7942 / FACHB-805) (Anacystis nidulans R2).